Reading from the N-terminus, the 358-residue chain is Alternative oxidase, mitochondrial (358 aa).

A helical transmembrane segment spans residues 152-172 (LIRYVFLESVAGVPGMVAGML). 3 residues coordinate Fe cation: glutamate 159, glutamate 198, and histidine 201. A helical membrane pass occupies residues 218 to 238 (MILGAQGVFFNSFFLCYLFSP). Fe cation contacts are provided by glutamate 249, glutamate 306, and histidine 309.

This sequence belongs to the alternative oxidase family. Fe cation is required as a cofactor.

Its subcellular location is the mitochondrion inner membrane. In terms of biological role, catalyzes cyanide-resistant oxygen consumption. May increase respiration when the cytochrome respiratory pathway is restricted, or in response to low temperatures. This chain is Alternative oxidase, mitochondrial (AOX1), found in Monilinia fructicola (Brown rot fungus).